We begin with the raw amino-acid sequence, 172 residues long: MKTKEVVDDITMNRAITRITYEIIERNKDLNQVVLAGIKTRGVHLAHRIQKRLAQLENIDIPVAEVDTKPFRDDIKVEEDTTVIPVDITDRQVILIDDVLYTGRTIRAAIDNLVSHGRPSRVGLAVLVDRGHRELPIRADYVGKNIPTSQTEEIIVEMTETDGQDRVLIMGE.

The short motif at 93 to 105 (VILIDDVLYTGRT) is the PRPP-binding element.

It belongs to the purine/pyrimidine phosphoribosyltransferase family. PyrR subfamily. In terms of assembly, homodimer and homohexamer; in equilibrium.

It carries out the reaction UMP + diphosphate = 5-phospho-alpha-D-ribose 1-diphosphate + uracil. Functionally, regulates transcriptional attenuation of the pyrimidine nucleotide (pyr) operon by binding in a uridine-dependent manner to specific sites on pyr mRNA. This disrupts an antiterminator hairpin in the RNA and favors formation of a downstream transcription terminator, leading to a reduced expression of downstream genes. Also displays a weak uracil phosphoribosyltransferase activity which is not physiologically significant. The polypeptide is Bifunctional protein PyrR (Streptococcus sanguinis (strain SK36)).